A 184-amino-acid chain; its full sequence is MAKYNEKELADTSKFLSFVLRHKPEAIGIVLDREGWADIDKLILCAQKAGKRLTRALLDTVVATSDKKRFSYSSDGRCIRAVQGHSTSQVAISFAEKTPPQFLYHGTASRFLDEIKKQGLIAGERHYVHLSADEATARKVGARHGSSVILTVKAQEMAKRGLPFWQAENGVWLTSTVAVEFLEW.

The protein belongs to the KptA/TPT1 family.

Its function is as follows. Removes the 2'-phosphate from RNA via an intermediate in which the phosphate is ADP-ribosylated by NAD followed by a presumed transesterification to release the RNA and generate ADP-ribose 1''-2''-cyclic phosphate (APPR&gt;P). May function as an ADP-ribosylase. This is Probable RNA 2'-phosphotransferase from Escherichia coli (strain K12 / MC4100 / BW2952).